An 892-amino-acid chain; its full sequence is Microsomal triglyceride transfer protein homolog (892 aa).

The signal sequence occupies residues Met-1–Ala-19.

As to quaternary structure, heterodimer; heterodimerizes with protein disulfide isomerase.

It localises to the endoplasmic reticulum. In terms of biological role, catalyzes the transport of cholesteryl ester, and phospholipid between phospholipid surfaces. Does not catalyze transport of triglycerides. Required for the assembly and secretion of plasma lipoproteins that contain apolipoprotein B. Required for normal expression of klf-3. The polypeptide is Microsomal triglyceride transfer protein homolog (Caenorhabditis elegans).